The sequence spans 447 residues: Tubulin beta chain (447 aa).

8 residues coordinate GTP: Gln11, Glu69, Ser138, Gly142, Thr143, Gly144, Asn204, and Asn226. Glu69 is a binding site for Mg(2+). A disordered region spans residues 425-447 (YQDASISEGEEEYEEEVPIEGEE). The span at 432-447 (EGEEEYEEEVPIEGEE) shows a compositional bias: acidic residues.

The protein belongs to the tubulin family. Dimer of alpha and beta chains. A typical microtubule is a hollow water-filled tube with an outer diameter of 25 nm and an inner diameter of 15 nM. Alpha-beta heterodimers associate head-to-tail to form protofilaments running lengthwise along the microtubule wall with the beta-tubulin subunit facing the microtubule plus end conferring a structural polarity. Microtubules usually have 13 protofilaments but different protofilament numbers can be found in some organisms and specialized cells. Mg(2+) is required as a cofactor.

The protein resides in the cytoplasm. The protein localises to the cytoskeleton. Functionally, tubulin is the major constituent of microtubules, a cylinder consisting of laterally associated linear protofilaments composed of alpha- and beta-tubulin heterodimers. Microtubules grow by the addition of GTP-tubulin dimers to the microtubule end, where a stabilizing cap forms. Below the cap, tubulin dimers are in GDP-bound state, owing to GTPase activity of alpha-tubulin. This is Tubulin beta chain (tubA) from Botryotinia fuckeliana (Noble rot fungus).